Reading from the N-terminus, the 179-residue chain is Crossover junction endodeoxyribonuclease RuvC (179 aa).

Residues Asp7 and Glu67 contribute to the active site. 2 residues coordinate Mn(2+): Asp7 and Glu67. The DNA-binding loop signature appears at 68–74 (DQILRRQ). Catalysis depends on residues His139 and Asp142. Position 139 (His139) interacts with Mn(2+).

Belongs to the RuvC family. In terms of assembly, homodimer which binds Holliday junction (HJ) DNA. The HJ becomes 2-fold symmetrical on binding to RuvC with unstacked arms; it has a different conformation from HJ DNA in complex with RuvA. In the full resolvosome a probable DNA-RuvA(4)-RuvB(12)-RuvC(2) complex forms which resolves the HJ. It depends on Mn(2+) as a cofactor.

Its subcellular location is the cytoplasm. It carries out the reaction Endonucleolytic cleavage at a junction such as a reciprocal single-stranded crossover between two homologous DNA duplexes (Holliday junction).. The RuvA-RuvB-RuvC complex processes Holliday junction (HJ) DNA during genetic recombination and DNA repair. Endonuclease that resolves HJ intermediates. Cleaves cruciform DNA by making single-stranded nicks across the HJ at symmetrical positions within the homologous arms, probably yielding a 5'-phosphate and a 3'-hydroxyl group; requires a central core of homology in the junction. The consensus cleavage sequence is 5'-(G/C)TC(C/G)-3' (a different site than E.coli); cleavage occurs on the 3'-side of the TC dinucleotide at the point of strand exchange. Also resolves nicked HJ intermediates, replication forks and Y-junction DNA in vitro. HJ branch migration catalyzed by RuvA-RuvB allows RuvC to scan DNA until it finds its consensus sequence, where it cleaves and resolves the cruciform DNA. Its function is as follows. Binds HJ DNA independently of homologous core or consensus sequence; Mn(2+) is not essential for binding but improves it, while &gt;1.0 mM Mg(2+) inhibit binding. Also binds Y-junction DNA less well. Requires a homologous core to cleave DNA. Another study shows divalent cations (Mn(2+), Mg(2+) and Ca(2+), tested up to 5.0 mM) improve DNA binding considerably over binding in their absence. The polypeptide is Crossover junction endodeoxyribonuclease RuvC (Deinococcus radiodurans (strain ATCC 13939 / DSM 20539 / JCM 16871 / CCUG 27074 / LMG 4051 / NBRC 15346 / NCIMB 9279 / VKM B-1422 / R1)).